Here is a 161-residue protein sequence, read N- to C-terminus: Phosphopantetheine adenylyltransferase (161 aa).

Thr10 contacts substrate. Residues 10-11 (TF) and His18 contribute to the ATP site. Residues Lys42, Met74, and Arg88 each contribute to the substrate site. Residues 89–91 (GVR), Glu99, and 124–130 (LSFVSSS) each bind ATP.

Belongs to the bacterial CoaD family. Homohexamer. Requires Mg(2+) as cofactor.

The protein localises to the cytoplasm. It catalyses the reaction (R)-4'-phosphopantetheine + ATP + H(+) = 3'-dephospho-CoA + diphosphate. It functions in the pathway cofactor biosynthesis; coenzyme A biosynthesis; CoA from (R)-pantothenate: step 4/5. Functionally, reversibly transfers an adenylyl group from ATP to 4'-phosphopantetheine, yielding dephospho-CoA (dPCoA) and pyrophosphate. The polypeptide is Phosphopantetheine adenylyltransferase (Proteus mirabilis (strain HI4320)).